The chain runs to 575 residues: 5-aminolevulinate synthase, mitochondrial (575 aa).

Residues 1–55 constitute a mitochondrion transit peptide; that stretch reads MESITRVSMSVCPFVKSSSAQALRQLSKNSALTSQARQCPFMGAALNAKESTRSY. Residues arginine 124, serine 237, and lysine 256 each coordinate substrate. 3 residues coordinate pyridoxal 5'-phosphate: serine 289, histidine 317, and threonine 361. Residue lysine 364 is part of the active site. N6-(pyridoxal phosphate)lysine is present on lysine 364. Residues threonine 393 and threonine 394 each contribute to the pyridoxal 5'-phosphate site. Residue threonine 479 participates in substrate binding.

Belongs to the class-II pyridoxal-phosphate-dependent aminotransferase family. In terms of assembly, homodimer. Requires pyridoxal 5'-phosphate as cofactor.

Its subcellular location is the mitochondrion matrix. It carries out the reaction succinyl-CoA + glycine + H(+) = 5-aminolevulinate + CO2 + CoA. It functions in the pathway porphyrin-containing compound metabolism; protoporphyrin-IX biosynthesis; 5-aminolevulinate from glycine: step 1/1. Its function is as follows. Catalyzes the synthesis of 5-aminolevulinate (ALA) from succinyl-CoA and glycine, the first and rate-limiting step in heme biosynthesis. The polypeptide is 5-aminolevulinate synthase, mitochondrial (HEM1) (Debaryomyces hansenii (strain ATCC 36239 / CBS 767 / BCRC 21394 / JCM 1990 / NBRC 0083 / IGC 2968) (Yeast)).